The sequence spans 562 residues: Transmembrane E3 ubiquitin-protein ligase FLY1 (562 aa).

Residues 1–32 (MKKREHLGLGFFEWQIILWLSIWLAISQQALG) form the signal peptide. At 33–262 (LRPIREKPRS…TSVNVEVYYN (230 aa)) the chain is on the lumenal side. A helical transmembrane segment spans residues 263-283 (KAVNYTLMVTFVSFLQVLLLI). Over 284-297 (RQMEHGNTQSGAAK) the chain is Cytoplasmic. Residues 298 to 318 (VSIVMIGQQAIMDAYLCLLHL) traverse the membrane as a helical segment. The Lumenal portion of the chain corresponds to 319 to 321 (TAG). The chain crosses the membrane as a helical span at residues 322–342 (ILVESLFNAFATAAFFKFVVF). Residues 343–373 (SIFEMRYLLAIWKATRPSNSGEGWETMRREL) are Cytoplasmic-facing. A helical membrane pass occupies residues 374-394 (SFLYSRFYGILLGGILIMYQF). At 395 to 397 (HNY) the chain is on the lumenal side. A helical transmembrane segment spans residues 398–418 (MQPILLLMYSFWIPQIVANVV). The Cytoplasmic portion of the chain corresponds to 419 to 426 (RDSRKPLH). Residues 427–447 (PYYILGMTATRLAIPLYVFGC) form a helical membrane-spanning segment. Residues 448 to 458 (PHNFMRVEPNK) lie on the Lumenal side of the membrane. The chain crosses the membrane as a helical span at residues 459-479 (VWCICLCTFMGLQAVILLLQH). The Cytoplasmic segment spans residues 480–562 (YFGSRCFVPR…PTCRRSLPPA (83 aa)). An RING-type; atypical zinc finger spans residues 512–556 (CVICMTAIDLRQHTSDCMVTPCEHFFHSGCLQRWMDIKMECPTCR).

Highly expressed in stems. Expressed in root xylem and seed coat.

Its subcellular location is the endomembrane system. It catalyses the reaction S-ubiquitinyl-[E2 ubiquitin-conjugating enzyme]-L-cysteine + [acceptor protein]-L-lysine = [E2 ubiquitin-conjugating enzyme]-L-cysteine + N(6)-ubiquitinyl-[acceptor protein]-L-lysine.. It participates in protein modification; protein ubiquitination. In terms of biological role, E3 ubiquitin-protein ligase that regulates the degree of methylesterification of pectin in seed mucilage. May be involved in the recycling of pectin methylesterase enzymes in the endomembrane system of seed coat epidermal cells. Possesses E3 ubiquitin-protein ligase activity in vitro when associated with the E1 enzyme UBA1 and the E2 enzyme UBC8. May be involved in xylem development. The sequence is that of Transmembrane E3 ubiquitin-protein ligase FLY1 from Arabidopsis thaliana (Mouse-ear cress).